Consider the following 130-residue polypeptide: Small ribosomal subunit protein uS8 (130 aa).

This sequence belongs to the universal ribosomal protein uS8 family. Part of the 30S ribosomal subunit.

Its function is as follows. One of the primary rRNA binding proteins, it binds directly to 16S rRNA central domain where it helps coordinate assembly of the platform of the 30S subunit. This Methanoregula boonei (strain DSM 21154 / JCM 14090 / 6A8) protein is Small ribosomal subunit protein uS8.